The following is a 388-amino-acid chain: P2X purinoceptor 4 (388 aa).

Residues 1-33 are Cytoplasmic-facing; that stretch reads MTGCCTVLGAFLFEYDTPRIVLIRSRKVGLMNR. A helical transmembrane segment spans residues 34-54; that stretch reads TVQLLILAYVIGWVFVWEKGY. Residues 55–338 lie on the Extracellular side of the membrane; it reads QETDSVVSSV…KFDIIPTMIN (284 aa). Positions 67 and 69 each coordinate ATP. CTP-binding residues include Lys67 and Lys69. Asn75, Asn110, Asn131, Asn153, and Asn184 each carry an N-linked (GlcNAc...) asparagine glycan. Cystine bridges form between Cys116–Cys165, Cys126–Cys149, and Cys132–Cys159. 2 residues coordinate ATP: Thr186 and Leu188. Thr186 lines the CTP pocket. 2 N-linked (GlcNAc...) asparagine glycosylation sites follow: Asn199 and Asn208. 2 disulfide bridges follow: Cys217/Cys227 and Cys261/Cys270. 3 residues coordinate ATP: Asn293, Arg295, and Lys313. Residues Asn293, Arg295, and Lys313 each contribute to the CTP site. The chain crosses the membrane as a helical span at residues 339-359; the sequence is IGSGLALLGVATVLCDVIVLY. Topologically, residues 360–388 are cytoplasmic; the sequence is CMKKRYYYREKKYKYVEDYEQGLGNQMEQ.

The protein belongs to the P2X receptor family. As to quaternary structure, functional P2RXs are organized as homomeric and heteromeric trimers. Forms heterotrimer with P2RX1. Interacts with P2RX7 (via C-terminus); this interaction is functional only in the presence of ATP. Forms heterotrimer with P2RX4; functional differences between homomeric P2RX4 and P2RX4/6 heterotrimer are minor. Interacts with AP1M2.

The protein localises to the cell membrane. The protein resides in the lysosome membrane. It catalyses the reaction K(+)(in) = K(+)(out). The catalysed reaction is Na(+)(in) = Na(+)(out). The enzyme catalyses Ca(2+)(in) = Ca(2+)(out). Activated by ATP. pH-dependent and inhibited by acidic pH. Functionally, ATP-gated nonselective transmembrane cation channel permeable to potassium, sodium and calcium. CTP, but not GTP or UTP, functions as a weak affinity agonist for P2RX4. Activated by extracellularly released ATP, it plays multiple role in immunity and central nervous system physiology. Could also function as an ATP-gated cation channel of lysosomal membranes. The protein is P2X purinoceptor 4 (P2RX4) of Bos taurus (Bovine).